The chain runs to 314 residues: Ribose-phosphate pyrophosphokinase (314 aa).

Residues Asp-37–Glu-39 and Arg-96–Gln-97 each bind ATP. 2 residues coordinate Mg(2+): His-131 and Asp-170. Residue Lys-194 is part of the active site. Residues Arg-196, Asp-220, and Asp-224–Thr-228 each bind D-ribose 5-phosphate.

This sequence belongs to the ribose-phosphate pyrophosphokinase family. Class I subfamily. In terms of assembly, homohexamer. Mg(2+) is required as a cofactor.

The protein resides in the cytoplasm. The enzyme catalyses D-ribose 5-phosphate + ATP = 5-phospho-alpha-D-ribose 1-diphosphate + AMP + H(+). Its pathway is metabolic intermediate biosynthesis; 5-phospho-alpha-D-ribose 1-diphosphate biosynthesis; 5-phospho-alpha-D-ribose 1-diphosphate from D-ribose 5-phosphate (route I): step 1/1. Functionally, involved in the biosynthesis of the central metabolite phospho-alpha-D-ribosyl-1-pyrophosphate (PRPP) via the transfer of pyrophosphoryl group from ATP to 1-hydroxyl of ribose-5-phosphate (Rib-5-P). In Vibrio parahaemolyticus serotype O3:K6 (strain RIMD 2210633), this protein is Ribose-phosphate pyrophosphokinase.